Here is a 333-residue protein sequence, read N- to C-terminus: Gap junction alpha-4 protein (333 aa).

Over 1 to 20 (MGDWGFLEKLLDQVQEHSTV) the chain is Cytoplasmic. A helical transmembrane segment spans residues 21-40 (VGKIWLTVLFIFRILILGLA). The Extracellular segment spans residues 41–76 (GESVWGDEQSDFECNTAQPGCTNVCYDQAFPISHIR). The chain crosses the membrane as a helical span at residues 77–99 (YWVLQFLFVSTPTLIYLGHVIYL). Over 100–148 (SRREERLRQKEGELRALPSKDLHVERALAAIEHQMAKISVAEDGRLRIR) the chain is Cytoplasmic. Residues 149 to 171 (GALMGTYVVSVLCKSVLEAGFLY) traverse the membrane as a helical segment. Residues 172–208 (GQWRLYGWTMEPVFVCQRAPCPHIVDCYVSRPTEKTI) are Extracellular-facing. The helical transmembrane segment at 209–231 (FIIFMLVVGVISLVLNLLELVHL) threads the bilayer. Residues 232–333 (LCRCVSREIK…NSSASKKQYV (102 aa)) lie on the Cytoplasmic side of the membrane. The interval 292–333 (ANLTTEERLTSSRPPPFVNTAPQGGRKSPSRPNSSASKKQYV) is disordered. The span at 321-333 (SRPNSSASKKQYV) shows a compositional bias: polar residues.

Belongs to the connexin family. Alpha-type (group II) subfamily. As to quaternary structure, a connexon is composed of a hexamer of connexins. Highly expressed in lung.

It localises to the cell membrane. The protein localises to the cell junction. Its subcellular location is the gap junction. Its function is as follows. One gap junction consists of a cluster of closely packed pairs of transmembrane channels, the connexons, through which materials of low MW diffuse from one cell to a neighboring cell. In Mus musculus (Mouse), this protein is Gap junction alpha-4 protein (Gja4).